The chain runs to 205 residues: MPGLLGKKIGMTSVFSADGKNVPCTVIEAGPCVVTQVKTVEKDGYAAVQLGFQDKKEKHTTKPLMGHFKRAGVTPKRHLAEFKEFETELNLGDTITVEMFNDATFVDVVGTSKGKGFQGVVKRHGFGGVGQATHGQHNRARKPGSIGACSYPAKVFKGMRMGGQLGGDRVTVQNLQVLKVIADHNLLLIKGSIPGCKGSIVIIEK.

The protein belongs to the universal ribosomal protein uL3 family. In terms of assembly, part of the 50S ribosomal subunit. Forms a cluster with proteins L14 and L19.

One of the primary rRNA binding proteins, it binds directly near the 3'-end of the 23S rRNA, where it nucleates assembly of the 50S subunit. The protein is Large ribosomal subunit protein uL3 of Bacteroides thetaiotaomicron (strain ATCC 29148 / DSM 2079 / JCM 5827 / CCUG 10774 / NCTC 10582 / VPI-5482 / E50).